The following is a 348-amino-acid chain: N-acetyl-gamma-glutamyl-phosphate reductase (348 aa).

Cys-150 is a catalytic residue.

This sequence belongs to the NAGSA dehydrogenase family. Type 1 subfamily.

The protein localises to the cytoplasm. It catalyses the reaction N-acetyl-L-glutamate 5-semialdehyde + phosphate + NADP(+) = N-acetyl-L-glutamyl 5-phosphate + NADPH + H(+). It participates in amino-acid biosynthesis; L-arginine biosynthesis; N(2)-acetyl-L-ornithine from L-glutamate: step 3/4. Its function is as follows. Catalyzes the NADPH-dependent reduction of N-acetyl-5-glutamyl phosphate to yield N-acetyl-L-glutamate 5-semialdehyde. This chain is N-acetyl-gamma-glutamyl-phosphate reductase, found in Symbiobacterium thermophilum (strain DSM 24528 / JCM 14929 / IAM 14863 / T).